A 336-amino-acid polypeptide reads, in one-letter code: Probable allantoicase (336 aa).

It belongs to the allantoicase family.

It carries out the reaction allantoate + H2O = (S)-ureidoglycolate + urea. It functions in the pathway nitrogen metabolism; (S)-allantoin degradation; (S)-ureidoglycolate from allantoate (aminidohydrolase route): step 1/1. The sequence is that of Probable allantoicase from Ralstonia nicotianae (strain ATCC BAA-1114 / GMI1000) (Ralstonia solanacearum).